Consider the following 245-residue polypeptide: tRNA1(Val) (adenine(37)-N6)-methyltransferase (245 aa).

The protein belongs to the methyltransferase superfamily. tRNA (adenine-N(6)-)-methyltransferase family.

The protein resides in the cytoplasm. It catalyses the reaction adenosine(37) in tRNA1(Val) + S-adenosyl-L-methionine = N(6)-methyladenosine(37) in tRNA1(Val) + S-adenosyl-L-homocysteine + H(+). In terms of biological role, specifically methylates the adenine in position 37 of tRNA(1)(Val) (anticodon cmo5UAC). In Klebsiella pneumoniae (strain 342), this protein is tRNA1(Val) (adenine(37)-N6)-methyltransferase.